We begin with the raw amino-acid sequence, 183 residues long: Protein Syd (183 aa).

Belongs to the Syd family.

It is found in the cell inner membrane. Interacts with the SecY protein in vivo. May bind preferentially to an uncomplexed state of SecY, thus functioning either as a chelating agent for excess SecY in the cell or as a regulatory factor that negatively controls the translocase function. The chain is Protein Syd from Aliivibrio fischeri (strain ATCC 700601 / ES114) (Vibrio fischeri).